We begin with the raw amino-acid sequence, 937 residues long: MVCPNGYDPGGRHLLLFIIILAAWEAGRGQLHYSVPEEAKHGNFVGRIAQDLGLELAELVPRLFRVVCKFRGDLLEVNLQNGILFVNSRIDREELCGRSAECSIHLEVIVERPLQVFHVDVEVKDINDNPPVFPATQRNLFIAESRPLDSRFPLEGASDADIGENALLTYRLSPNEYFFLDVPTSNQQVKPLGLVLRKLLDREETPELHLLLTATDGGKPELTGTVQLLITVLDNNDNAPVFDRTLYTVKLPENVSIGTLVIHPNASDLDEGLNGDIIYSFSSDVSPDIKSKFHMDPLSGAITVIGHMDFEESRAHKIPVEAVDKGFPPLAGHCTVLVEVVDVNDNAPQLTLTSLSLPIPEDAQPGTVITLISVFDRDFGVNGQVTCSLTPHVPFKLVSTFKNYYSLVLDRALDRESVSAYELVVTARDGGSPSLWATASVSVEVADVNDNAPAFAQPEYTVFVKENNPPGCHIFTVSAGDADAQKNALVSYSLVERRVGERALSSYISVHAESGKVYVLQPLDHEELELLQFQVSARDAGVPPLGSNVTLQVFVLDENDNAPALLAPRVGGTGGAVRELVPRSVGAGHVVAKVRAVDADSGYNAWLSYELQPVAAGASIPFRVGLYTGEISTTRALDETDAPRHRLLVLVKDHGEPSLTATATVLVSLVESGQAPKASSRASLGIAGPETELVDVNVYLIIAICAVSSLLVLTLLLYTALRCSAPSSEGACSLIKPTLVCSSAVGSWSFSQQRRQRVCSGEGPPKTDLMAFSPSLPQGPSSTDNPRQPNPDWRYSASLRAGMHSSVHLEEAGILRAGPGGPDQQWPTVSSATPEPEAGEVSPPVGAGVNSNSWTFKYGPGNPKQSGPGELPDKFIIPGSPAIISIRQEPANSQIDKSDFITFGKKEETKKKKKKKKGNKTQEKKEKGNSTTDNSDQ.

The signal sequence occupies residues 1–29; it reads MVCPNGYDPGGRHLLLFIIILAAWEAGRG. Cadherin domains are found at residues 30-133, 134-242, 243-350, 351-455, 456-565, and 581-678; these read QLHY…PPVF, PATQ…APVF, DRTL…APQL, TLTS…APAF, AQPE…APAL, and VPRS…APKA. Topologically, residues 30 to 697 are extracellular; sequence QLHYSVPEEA…GPETELVDVN (668 aa). A disulfide bond links C96 and C102. 2 N-linked (GlcNAc...) asparagine glycosylation sites follow: N254 and N265. A glycan (N-linked (GlcNAc...) asparagine) is linked at N548. A helical transmembrane segment spans residues 698-718; it reads VYLIIAICAVSSLLVLTLLLY. The Cytoplasmic segment spans residues 719-937; that stretch reads TALRCSAPSS…GNSTTDNSDQ (219 aa). Disordered stretches follow at residues 756-795 and 817-843; these read QRVC…DWRY and AGPG…EVSP. PXXP repeat units follow at residues 774–777, 786–789, 819–822, 860–863, and 878–881; these read PSLP, PRQP, PGGP, PGNP, and PGSP. Residues 774–881 form a 5 X 4 AA repeats of P-X-X-P region; it reads PSLPQGPSST…PDKFIIPGSP (108 aa). Positions 775 to 787 are enriched in polar residues; that stretch reads SLPQGPSSTDNPR. The disordered stretch occupies residues 888 to 937; the sequence is QEPANSQIDKSDFITFGKKEETKKKKKKKKGNKTQEKKEKGNSTTDNSDQ. A compositionally biased stretch (basic and acidic residues) spans 896 to 910; it reads DKSDFITFGKKEETK.

Forms homodimers in trans (molecules expressed by two different cells). Forms promiscuous heterodimers in cis (at the plasma membrane of the same cell) with other protocadherins.

The protein resides in the cell membrane. Functionally, calcium-dependent cell-adhesion protein involved in cells self-recognition and non-self discrimination. Thereby, it is involved in the establishment and maintenance of specific neuronal connections in the brain. The polypeptide is Protocadherin alpha-7 (Pan troglodytes (Chimpanzee)).